The following is a 317-amino-acid chain: Malate dehydrogenase (317 aa).

NAD(+) contacts are provided by residues 13–18 (GAGNIG) and D38. Residues R87 and R93 each contribute to the substrate site. NAD(+) contacts are provided by residues N100 and 123–125 (VTN). Substrate-binding residues include N125 and R156. The active-site Proton acceptor is H180.

The protein belongs to the LDH/MDH superfamily. MDH type 3 family.

It catalyses the reaction (S)-malate + NAD(+) = oxaloacetate + NADH + H(+). Functionally, catalyzes the reversible oxidation of malate to oxaloacetate. This is Malate dehydrogenase from Anaplasma marginale (strain St. Maries).